The chain runs to 184 residues: Peptide deformylase (184 aa).

Residues C111 and H154 each contribute to the Fe cation site. Residue E155 is part of the active site. Fe cation is bound at residue H158.

It belongs to the polypeptide deformylase family. The cofactor is Fe(2+).

It carries out the reaction N-terminal N-formyl-L-methionyl-[peptide] + H2O = N-terminal L-methionyl-[peptide] + formate. Removes the formyl group from the N-terminal Met of newly synthesized proteins. Requires at least a dipeptide for an efficient rate of reaction. N-terminal L-methionine is a prerequisite for activity but the enzyme has broad specificity at other positions. This Lacticaseibacillus casei (strain BL23) (Lactobacillus casei) protein is Peptide deformylase.